The following is a 568-amino-acid chain: CTP synthase (568 aa).

Residues 1–276 form an amidoligase domain region; the sequence is MPQARTIKHV…DAYLVRRLGL (276 aa). A CTP-binding site is contributed by Ser-18. A UTP-binding site is contributed by Ser-18. Residues 19–24 and Asp-76 contribute to the ATP site; that span reads SLGKGL. Mg(2+)-binding residues include Asp-76 and Glu-150. Residues 157–159, 197–202, and Lys-233 contribute to the CTP site; these read DIE and KTKPTQ. UTP is bound by residues 197-202 and Lys-233; that span reads KTKPTQ. The 250-residue stretch at 301–550 folds into the Glutamine amidotransferase type-1 domain; that stretch reads RIALVGKYVD…VNAALEYRAA (250 aa). Gly-364 is an L-glutamine binding site. The active-site Nucleophile; for glutamine hydrolysis is Cys-391. Residues 392–395, Glu-415, and Arg-476 each bind L-glutamine; that span reads LGLQ. Active-site residues include His-523 and Glu-525.

The protein belongs to the CTP synthase family. Homotetramer.

The enzyme catalyses UTP + L-glutamine + ATP + H2O = CTP + L-glutamate + ADP + phosphate + 2 H(+). It carries out the reaction L-glutamine + H2O = L-glutamate + NH4(+). It catalyses the reaction UTP + NH4(+) + ATP = CTP + ADP + phosphate + 2 H(+). It functions in the pathway pyrimidine metabolism; CTP biosynthesis via de novo pathway; CTP from UDP: step 2/2. Allosterically activated by GTP, when glutamine is the substrate; GTP has no effect on the reaction when ammonia is the substrate. The allosteric effector GTP functions by stabilizing the protein conformation that binds the tetrahedral intermediate(s) formed during glutamine hydrolysis. Inhibited by the product CTP, via allosteric rather than competitive inhibition. In terms of biological role, catalyzes the ATP-dependent amination of UTP to CTP with either L-glutamine or ammonia as the source of nitrogen. Regulates intracellular CTP levels through interactions with the four ribonucleotide triphosphates. The polypeptide is CTP synthase (Saccharopolyspora erythraea (strain ATCC 11635 / DSM 40517 / JCM 4748 / NBRC 13426 / NCIMB 8594 / NRRL 2338)).